Consider the following 76-residue polypeptide: Acyl carrier protein (76 aa).

Residues 1–76 enclose the Carrier domain; the sequence is MSIEERVKKI…SAIDYVQNNQ (76 aa). At serine 36 the chain carries O-(pantetheine 4'-phosphoryl)serine.

Belongs to the acyl carrier protein (ACP) family. 4'-phosphopantetheine is transferred from CoA to a specific serine of apo-ACP by AcpS. This modification is essential for activity because fatty acids are bound in thioester linkage to the sulfhydryl of the prosthetic group.

The protein localises to the cytoplasm. Its pathway is lipid metabolism; fatty acid biosynthesis. Carrier of the growing fatty acid chain in fatty acid biosynthesis. The protein is Acyl carrier protein of Pasteurella multocida (strain Pm70).